A 109-amino-acid chain; its full sequence is Transcription initiation factor IIA subunit 2 (109 aa).

This sequence belongs to the TFIIA subunit 2 family. As to quaternary structure, TFIIA is a heterodimer of the large unprocessed subunit 1 and a small subunit gamma. It was originally believed to be a heterotrimer of an alpha (p35), a beta (p19) and a gamma subunit (p12). Interacts with NCOA6 general coactivator. TFIIA forms a complex with TBP. Interacts with HSF1 (via transactivation domain). Part of TBP-based Pol II pre-initiation complex (PIC), in which Pol II core assembles with general transcription factors and other specific initiation factors including GTF2E1, GTF2E2, GTF2F1, GTF2F2, TCEA1, ERCC2, ERCC3, GTF2H2, GTF2H3, GTF2H4, GTF2H5, GTF2A1, GTF2A2, GTF2B and TBP; this large multi-subunit PIC complex mediates DNA unwinding and targets Pol II core to the transcription start site where the first phosphodiester bond forms.

The protein resides in the nucleus. Its function is as follows. TFIIA is a component of the transcription machinery of RNA polymerase II and plays an important role in transcriptional activation. TFIIA in a complex with TBP mediates transcriptional activity. The protein is Transcription initiation factor IIA subunit 2 (Gtf2a2) of Rattus norvegicus (Rat).